A 244-amino-acid chain; its full sequence is Ribosomal RNA large subunit methyltransferase E (244 aa).

Residues Gly-81, Trp-83, Asp-109, Asp-125, and Asp-149 each coordinate S-adenosyl-L-methionine. Lys-189 (proton acceptor) is an active-site residue.

The protein belongs to the class I-like SAM-binding methyltransferase superfamily. RNA methyltransferase RlmE family.

It is found in the cytoplasm. It carries out the reaction uridine(2552) in 23S rRNA + S-adenosyl-L-methionine = 2'-O-methyluridine(2552) in 23S rRNA + S-adenosyl-L-homocysteine + H(+). Its function is as follows. Specifically methylates the uridine in position 2552 of 23S rRNA at the 2'-O position of the ribose in the fully assembled 50S ribosomal subunit. The protein is Ribosomal RNA large subunit methyltransferase E of Cereibacter sphaeroides (strain ATCC 17023 / DSM 158 / JCM 6121 / CCUG 31486 / LMG 2827 / NBRC 12203 / NCIMB 8253 / ATH 2.4.1.) (Rhodobacter sphaeroides).